The chain runs to 353 residues: B1 bradykinin receptor (353 aa).

Residues M1–L40 lie on the Extracellular side of the membrane. N14 and N22 each carry an N-linked (GlcNAc...) asparagine glycan. A helical transmembrane segment spans residues P41 to L64. Residues P65–E73 lie on the Cytoplasmic side of the membrane. Residues I74–W98 traverse the membrane as a helical segment. The Extracellular segment spans residues N99–R111. A disulfide bond links C110 and C189. The chain crosses the membrane as a helical span at residues V112–Q133. Residues D134–R155 are Cytoplasmic-facing. Residues V156–I178 form a helical membrane-spanning segment. Residues Q179–H199 are Extracellular-facing. Residue N185 is glycosylated (N-linked (GlcNAc...) asparagine). Residues F200–L226 form a helical membrane-spanning segment. The Cytoplasmic portion of the chain corresponds to A227 to K247. The chain crosses the membrane as a helical span at residues T248 to L272. Residues E273 to D291 are Extracellular-facing. The helical transmembrane segment at L292–F314 threads the bilayer. Topologically, residues V315–N353 are cytoplasmic. C330 carries the S-palmitoyl cysteine lipid modification.

This sequence belongs to the G-protein coupled receptor 1 family. Bradykinin receptor subfamily. BDKRB1 sub-subfamily.

The protein localises to the cell membrane. In terms of biological role, this is a receptor for bradykinin. Could be a factor in chronic pain and inflammation. The sequence is that of B1 bradykinin receptor (BDKRB1) from Homo sapiens (Human).